Reading from the N-terminus, the 188-residue chain is Probable nicotinate-nucleotide adenylyltransferase (188 aa).

This sequence belongs to the NadD family.

It carries out the reaction nicotinate beta-D-ribonucleotide + ATP + H(+) = deamido-NAD(+) + diphosphate. The protein operates within cofactor biosynthesis; NAD(+) biosynthesis; deamido-NAD(+) from nicotinate D-ribonucleotide: step 1/1. In terms of biological role, catalyzes the reversible adenylation of nicotinate mononucleotide (NaMN) to nicotinic acid adenine dinucleotide (NaAD). The chain is Probable nicotinate-nucleotide adenylyltransferase from Salinispora arenicola (strain CNS-205).